Here is an 818-residue protein sequence, read N- to C-terminus: Response regulator SSK1 (818 aa).

In terms of domain architecture, Response regulatory spans asparagine 611–glycine 769. Aspartate 660 carries the post-translational modification 4-aspartylphosphate.

Belongs to the SSK1 family.

Its subcellular location is the cytoplasm. Its function is as follows. Two-domain response regulator protein in the two-component signal transduction system of the HOG1 pathway. Modulates stress response, melanin biosynthesis and virulence via its regulation of the phosphorylation of HOG1. This is Response regulator SSK1 from Verticillium dahliae (strain VdLs.17 / ATCC MYA-4575 / FGSC 10137) (Verticillium wilt).